The primary structure comprises 237 residues: CDP-diacylglycerol--inositol 3-phosphatidyltransferase (237 aa).

Topologically, residues 1–12 are cytoplasmic; that stretch reads MGKNEQKDPNVY. The chain crosses the membrane as a helical span at residues 13-33; sequence FFVPNLIGFTRVFLVLISLYF. The Lumenal segment spans residues 34-41; that stretch reads MSWHPNYC. The chain crosses the membrane as a helical span at residues 42 to 62; it reads TIVYLYSSLLDAFDGWAARKL. Mg(2+)-binding residues include D52 and D55. 3 residues coordinate a CDP-1,2-diacyl-sn-glycerol: G56, R60, and T66. The Cytoplasmic segment spans residues 63–71; that stretch reads HQATNFGAI. The helical transmembrane segment at 72–92 threads the bilayer; it reads LDMVTDRCATSCLLCFLCAAY. The Mg(2+) site is built by D73 and D77. D77 (proton acceptor) is an active-site residue. Residues 93–94 are Lumenal-facing; sequence PK. A helical membrane pass occupies residues 95–115; sequence YAIIFQLLVSLDLASHYMHMY. Over 116-144 the chain is Cytoplasmic; sequence STLHQGASSHKTVTKKHNWMLRLYYGNNK. A helical transmembrane segment spans residues 145-165; that stretch reads VLFIFCAANEMFFVALYLLSF. Residues 166–185 are Lumenal-facing; it reads TPRTPPKLGYLPVPSFIYST. A helical membrane pass occupies residues 186 to 206; it reads GELPLSYPTLLAVLCGPICLA. The Cytoplasmic segment spans residues 207 to 237; that stretch reads KQIINVVQLVNAANALVKMDVEQRRAAKKLQ.

The protein belongs to the CDP-alcohol phosphatidyltransferase class-I family. Requires Mn(2+) as cofactor. The cofactor is Mg(2+).

The protein resides in the microsome membrane. Its subcellular location is the endoplasmic reticulum membrane. It localises to the golgi apparatus membrane. It is found in the mitochondrion outer membrane. The catalysed reaction is a CDP-1,2-diacyl-sn-glycerol + myo-inositol = a 1,2-diacyl-sn-glycero-3-phospho-(1D-myo-inositol) + CMP + H(+). Catalyzes the synthesis of phosphatidylinositol (PtdIns). The chain is CDP-diacylglycerol--inositol 3-phosphatidyltransferase (pis1) from Schizosaccharomyces pombe (strain 972 / ATCC 24843) (Fission yeast).